We begin with the raw amino-acid sequence, 555 residues long: Perforin-1 (555 aa).

Positions 1–21 (MAARLLLLGILLLLLPLPVPA) are cleaved as a signal peptide. 3 disulfides stabilise this stretch: Cys-23-Cys-76, Cys-31-Cys-73, and Cys-102-Cys-176. One can recognise an MACPF domain in the interval 27–375 (ARSECKRSHK…QYLTDRARWR (349 aa)). The beta stranded transmembrane segment at 129–149 (WKVGLDVTPKPTSNVHVSVAG) threads the bilayer. Residue Asn-205 is glycosylated (N-linked (GlcNAc...) asparagine). 4 disulfides stabilise this stretch: Cys-242–Cys-408, Cys-377–Cys-393, Cys-381–Cys-395, and Cys-397–Cys-407. A beta stranded membrane pass occupies residues 257–279 (CLTVEAQVNIGIHGSISAEAKAC). Residues 376 to 408 (DCSRPCPPGRQKSPRDPCQCVCHGSAVTTQDCC) enclose the EGF-like domain. The 123-residue stretch at 397-519 (CHGSAVTTQD…CNLNHGHLKF (123 aa)) folds into the C2 domain. Ca(2+) contacts are provided by Gly-429, Asp-430, Thr-433, Ala-434, Asp-436, Asp-484, Asp-486, Asp-490, Asp-491, and Asp-492. 2 cysteine pairs are disulfide-bonded: Cys-497/Cys-510 and Cys-525/Cys-534. Residue Asn-549 is glycosylated (N-linked (GlcNAc...) asparagine).

The protein belongs to the complement C6/C7/C8/C9 family. In terms of assembly, monomer, as soluble protein. Homooligomer; homooligomerizes to form a pore-forming ring. Ca(2+) serves as cofactor. In terms of processing, N-glycosylated.

The protein localises to the cytolytic granule. It localises to the secreted. Its subcellular location is the cell membrane. The protein resides in the endosome lumen. In terms of biological role, pore-forming protein that plays a key role in granzyme-mediated programmed cell death, and in defense against virus-infected or neoplastic cells. Plays an important role in killing other cells that are recognized as non-self by the immune system, e.g. in transplant rejection or some forms of autoimmune disease. Can insert into the membrane of target cells in its calcium-bound form, oligomerize and form large pores. Promotes cytolysis and apoptosis of target cells by mediating the passage and uptake of cytotoxic granzymes. Facilitates the delivery of cationic cargo protein, while anionic or neural proteins are not delivered efficiently. Perforin pores allow the release of mature caspase-7 (CASP7) into the extracellular milieu. The polypeptide is Perforin-1 (PRF1) (Homo sapiens (Human)).